Reading from the N-terminus, the 591-residue chain is Aspartate--tRNA(Asp/Asn) ligase (591 aa).

Position 174 (glutamate 174) interacts with L-aspartate. The tract at residues 198–201 (QLFK) is aspartate. Position 220 (arginine 220) interacts with L-aspartate. Residues 220–222 (RDE) and glutamine 229 contribute to the ATP site. Residue histidine 450 participates in L-aspartate binding. Glutamate 483 contacts ATP. Arginine 490 is a binding site for L-aspartate. 535–538 (GLDR) lines the ATP pocket.

The protein belongs to the class-II aminoacyl-tRNA synthetase family. Type 1 subfamily. Homodimer.

It localises to the cytoplasm. It carries out the reaction tRNA(Asx) + L-aspartate + ATP = L-aspartyl-tRNA(Asx) + AMP + diphosphate. Aspartyl-tRNA synthetase with relaxed tRNA specificity since it is able to aspartylate not only its cognate tRNA(Asp) but also tRNA(Asn). Reaction proceeds in two steps: L-aspartate is first activated by ATP to form Asp-AMP and then transferred to the acceptor end of tRNA(Asp/Asn). The chain is Aspartate--tRNA(Asp/Asn) ligase from Ectopseudomonas mendocina (strain ymp) (Pseudomonas mendocina).